The primary structure comprises 258 residues: Phosphoribosylaminoimidazole-succinocarboxamide synthase (258 aa).

Belongs to the SAICAR synthetase family.

It carries out the reaction 5-amino-1-(5-phospho-D-ribosyl)imidazole-4-carboxylate + L-aspartate + ATP = (2S)-2-[5-amino-1-(5-phospho-beta-D-ribosyl)imidazole-4-carboxamido]succinate + ADP + phosphate + 2 H(+). Its pathway is purine metabolism; IMP biosynthesis via de novo pathway; 5-amino-1-(5-phospho-D-ribosyl)imidazole-4-carboxamide from 5-amino-1-(5-phospho-D-ribosyl)imidazole-4-carboxylate: step 1/2. This chain is Phosphoribosylaminoimidazole-succinocarboxamide synthase, found in Rhizorhabdus wittichii (strain DSM 6014 / CCUG 31198 / JCM 15750 / NBRC 105917 / EY 4224 / RW1) (Sphingomonas wittichii).